The following is a 276-amino-acid chain: Tryptophan synthase alpha chain (276 aa).

Active-site proton acceptor residues include E46 and E57.

The protein belongs to the TrpA family. In terms of assembly, tetramer of two alpha and two beta chains.

The enzyme catalyses (1S,2R)-1-C-(indol-3-yl)glycerol 3-phosphate + L-serine = D-glyceraldehyde 3-phosphate + L-tryptophan + H2O. The protein operates within amino-acid biosynthesis; L-tryptophan biosynthesis; L-tryptophan from chorismate: step 5/5. In terms of biological role, the alpha subunit is responsible for the aldol cleavage of indoleglycerol phosphate to indole and glyceraldehyde 3-phosphate. This Halobacterium salinarum (strain ATCC 29341 / DSM 671 / R1) protein is Tryptophan synthase alpha chain.